Reading from the N-terminus, the 412-residue chain is Multifunctional CCA protein (412 aa).

Gly8 and Arg11 together coordinate ATP. Residues Gly8 and Arg11 each contribute to the CTP site. The Mg(2+) site is built by Asp21 and Asp23. ATP-binding residues include Arg91, Arg137, and Arg140. Residues Arg91, Arg137, and Arg140 each contribute to the CTP site. The 102-residue stretch at 228–329 (TGIHTLMTLS…VKLFDSIDAW (102 aa)) folds into the HD domain.

Belongs to the tRNA nucleotidyltransferase/poly(A) polymerase family. Bacterial CCA-adding enzyme type 1 subfamily. As to quaternary structure, monomer. Can also form homodimers and oligomers. Requires Mg(2+) as cofactor. Ni(2+) serves as cofactor.

It carries out the reaction a tRNA precursor + 2 CTP + ATP = a tRNA with a 3' CCA end + 3 diphosphate. The enzyme catalyses a tRNA with a 3' CCA end + 2 CTP + ATP = a tRNA with a 3' CCACCA end + 3 diphosphate. Functionally, catalyzes the addition and repair of the essential 3'-terminal CCA sequence in tRNAs without using a nucleic acid template. Adds these three nucleotides in the order of C, C, and A to the tRNA nucleotide-73, using CTP and ATP as substrates and producing inorganic pyrophosphate. tRNA 3'-terminal CCA addition is required both for tRNA processing and repair. Also involved in tRNA surveillance by mediating tandem CCA addition to generate a CCACCA at the 3' terminus of unstable tRNAs. While stable tRNAs receive only 3'-terminal CCA, unstable tRNAs are marked with CCACCA and rapidly degraded. This is Multifunctional CCA protein from Shigella flexneri.